Reading from the N-terminus, the 289-residue chain is Glucosamine-6-phosphate deaminase 1 (289 aa).

At lysine 64 the chain carries N6-acetyllysine. Catalysis depends on aspartate 72, which acts as the Proton acceptor; for enolization step. Aspartate 141 (for ring-opening step) is an active-site residue. Histidine 143 functions as the Proton acceptor; for ring-opening step in the catalytic mechanism. The active-site For ring-opening step is the glutamate 148. Residue threonine 161 is modified to Phosphothreonine.

The protein belongs to the glucosamine/galactosamine-6-phosphate isomerase family. In terms of assembly, homohexamer.

Its subcellular location is the cytoplasm. It catalyses the reaction alpha-D-glucosamine 6-phosphate + H2O = beta-D-fructose 6-phosphate + NH4(+). It participates in nucleotide-sugar biosynthesis; UDP-N-acetyl-alpha-D-glucosamine biosynthesis; alpha-D-glucosamine 6-phosphate from D-fructose 6-phosphate: step 1/1. Allosterically activated by N-acetylglucosamine-6-phosphate (GlcNAc6P). Functionally, catalyzes the reversible conversion of alpha-D-glucosamine 6-phosphate (GlcN-6P) into beta-D-fructose 6-phosphate (Fru-6P) and ammonium ion, a regulatory reaction step in de novo uridine diphosphate-N-acetyl-alpha-D-glucosamine (UDP-GlcNAc) biosynthesis via hexosamine pathway. Deamination is coupled to aldo-keto isomerization mediating the metabolic flux from UDP-GlcNAc toward Fru-6P. At high ammonium level can drive amination and isomerization of Fru-6P toward hexosamines and UDP-GlcNAc synthesis. Has a role in fine tuning the metabolic fluctuations of cytosolic UDP-GlcNAc and their effects on hyaluronan synthesis that occur during tissue remodeling. Seems to trigger calcium oscillations in mammalian eggs. These oscillations serve as the essential trigger for egg activation and early development of the embryo. The protein is Glucosamine-6-phosphate deaminase 1 of Homo sapiens (Human).